A 312-amino-acid polypeptide reads, in one-letter code: Olfactory receptor 2C1 (312 aa).

Residues 1 to 24 lie on the Extracellular side of the membrane; sequence MEVDSNSSSGSFILMGVSDHPHLE. A glycan (N-linked (GlcNAc...) asparagine) is linked at Asn-6. The helical transmembrane segment at 25–48 threads the bilayer; that stretch reads IIFFAVILASYLLTLVGNLTIILL. Residues 49–57 are Cytoplasmic-facing; that stretch reads SRLDARLHT. A helical membrane pass occupies residues 58–79; the sequence is PMYFFLSNLSSLDLAFTTSSVP. Topologically, residues 80–100 are extracellular; it reads QMLKNLWGPDKTISYGGCVTQ. Cys-97 and Cys-189 are disulfide-bonded. The helical transmembrane segment at 101 to 120 threads the bilayer; sequence LYVFLWLGATECILLVVMAF. At 121 to 139 the chain is on the cytoplasmic side; the sequence is DRYVAVCRPLHYMTVMNPR. Residues 140–160 traverse the membrane as a helical segment; sequence LCWGLAAISWLGGLGNSVIQS. Over 161–200 the chain is Extracellular; it reads TFTLQLPFCGHRKVDNFLCEVPAMIKLACGDTSLNEAVLN. Residues 201-222 form a helical membrane-spanning segment; sequence GVCTFFTVVPVSVILVSYCFIA. Residues 223–236 lie on the Cytoplasmic side of the membrane; that stretch reads QAVMKIRSVEGRRK. Residues 237–261 traverse the membrane as a helical segment; the sequence is AFNTCVSHLVVVFLFYGSAIYGYLL. At 262–272 the chain is on the extracellular side; it reads PAKSSNQSQGK. The helical transmembrane segment at 273-292 threads the bilayer; it reads FISLFYSVVTPMVNPLIYTL. Over 293 to 312 the chain is Cytoplasmic; the sequence is RNKEVKGALGRLLGKGRGAS.

It belongs to the G-protein coupled receptor 1 family. As to expression, olfactory epithelium. Present in various subcellular compartments of the olfactory sensory neurons, particularly in the axonal processes and neve terminals.

The protein localises to the cell membrane. Olfactory receptor that is activated by the binding of organosulfur odorants with thioether groups such as (methylthio)methanetiol (MTMT). Also binds odorants acetophenone and benzaldehyde. The activity of this receptor is mediated by G proteins which activate adenylyl cyclase. May be involved in the molecular processes underlying fasciculation and targeting of olfactory axons. This Mus musculus (Mouse) protein is Olfactory receptor 2C1.